The chain runs to 279 residues: Large ribosomal subunit protein uL2 (279 aa).

A disordered region spans residues 224 to 279 (AMNPIDHPHGGGEGRTSGGRHPVTPWGKGTKGNRTRKSKASDKLIVRSRHAKKKGR). Residues 269-279 (VRSRHAKKKGR) are compositionally biased toward basic residues.

Belongs to the universal ribosomal protein uL2 family. As to quaternary structure, part of the 50S ribosomal subunit. Forms a bridge to the 30S subunit in the 70S ribosome.

Its function is as follows. One of the primary rRNA binding proteins. Required for association of the 30S and 50S subunits to form the 70S ribosome, for tRNA binding and peptide bond formation. It has been suggested to have peptidyltransferase activity; this is somewhat controversial. Makes several contacts with the 16S rRNA in the 70S ribosome. In Cereibacter sphaeroides (strain ATCC 17025 / ATH 2.4.3) (Rhodobacter sphaeroides), this protein is Large ribosomal subunit protein uL2.